Consider the following 431-residue polypeptide: Enolase (431 aa).

Q166 is a binding site for (2R)-2-phosphoglycerate. E208 (proton donor) is an active-site residue. D245, E288, and D315 together coordinate Mg(2+). 4 residues coordinate (2R)-2-phosphoglycerate: K340, R369, S370, and K391. The active-site Proton acceptor is the K340.

The protein belongs to the enolase family. The cofactor is Mg(2+).

Its subcellular location is the cytoplasm. The protein resides in the secreted. It localises to the cell surface. The enzyme catalyses (2R)-2-phosphoglycerate = phosphoenolpyruvate + H2O. The protein operates within carbohydrate degradation; glycolysis; pyruvate from D-glyceraldehyde 3-phosphate: step 4/5. Functionally, catalyzes the reversible conversion of 2-phosphoglycerate (2-PG) into phosphoenolpyruvate (PEP). It is essential for the degradation of carbohydrates via glycolysis. In Clostridium tetani (strain Massachusetts / E88), this protein is Enolase.